The following is a 101-amino-acid chain: Small ribosomal subunit protein uS14 (101 aa).

The protein belongs to the universal ribosomal protein uS14 family. Part of the 30S ribosomal subunit. Contacts proteins S3 and S10.

Functionally, binds 16S rRNA, required for the assembly of 30S particles and may also be responsible for determining the conformation of the 16S rRNA at the A site. The chain is Small ribosomal subunit protein uS14 from Bartonella bacilliformis (strain ATCC 35685 / KC583 / Herrer 020/F12,63).